Consider the following 203-residue polypeptide: Probable GTP-binding protein EngB (203 aa).

An EngB-type G domain is found at 21 to 196; it reads GAPEIAFLGR…WKKIFEAAGT (176 aa). GTP contacts are provided by residues 29–36, 55–59, 79–82, 146–149, and 175–177; these read GRSNVGKS, GRTQT, DLPG, TKID, and FSA. Positions 36 and 57 each coordinate Mg(2+).

Belongs to the TRAFAC class TrmE-Era-EngA-EngB-Septin-like GTPase superfamily. EngB GTPase family. The cofactor is Mg(2+).

Necessary for normal cell division and for the maintenance of normal septation. This Koribacter versatilis (strain Ellin345) protein is Probable GTP-binding protein EngB.